Here is a 91-residue protein sequence, read N- to C-terminus: Small ribosomal subunit protein bS18 (91 aa).

This sequence belongs to the bacterial ribosomal protein bS18 family. In terms of assembly, part of the 30S ribosomal subunit. Forms a tight heterodimer with protein bS6.

Functionally, binds as a heterodimer with protein bS6 to the central domain of the 16S rRNA, where it helps stabilize the platform of the 30S subunit. The chain is Small ribosomal subunit protein bS18 from Burkholderia ambifaria (strain MC40-6).